A 555-amino-acid polypeptide reads, in one-letter code: Potassium-transporting ATPase potassium-binding subunit (555 aa).

10 helical membrane-spanning segments follow: residues 2–22 (IWVA…PTGI), 60–80 (QYAL…YFVF), 130–150 (IGIT…VMAF), 173–193 (VFLP…VPQT), 246–266 (MSNI…PFTY), 278–298 (ILFV…TTSE), 374–394 (AGFV…GLMV), 412–432 (LIAV…ALAL), 483–503 (LVMF…AASL), and 525–545 (GIFI…MLVL).

It belongs to the KdpA family. In terms of assembly, the system is composed of three essential subunits: KdpA, KdpB and KdpC.

It localises to the cell membrane. Part of the high-affinity ATP-driven potassium transport (or Kdp) system, which catalyzes the hydrolysis of ATP coupled with the electrogenic transport of potassium into the cytoplasm. This subunit binds the extracellular potassium ions and delivers the ions to the membrane domain of KdpB through an intramembrane tunnel. The protein is Potassium-transporting ATPase potassium-binding subunit of Bacillus cereus (strain ATCC 10987 / NRS 248).